A 112-amino-acid polypeptide reads, in one-letter code: uncharacterized protein (112 aa).

It to Buchnera BU585.

This is an uncharacterized protein from Buchnera aphidicola subsp. Schizaphis graminum (strain Sg).